The sequence spans 168 residues: Probable chemoreceptor glutamine deamidase CheD (168 aa).

The protein belongs to the CheD family.

It catalyses the reaction L-glutaminyl-[protein] + H2O = L-glutamyl-[protein] + NH4(+). Probably deamidates glutamine residues to glutamate on methyl-accepting chemotaxis receptors (MCPs), playing an important role in chemotaxis. The sequence is that of Probable chemoreceptor glutamine deamidase CheD from Pseudomonas syringae pv. tomato (strain ATCC BAA-871 / DC3000).